The sequence spans 188 residues: Transcription factor FapR (188 aa).

This sequence belongs to the FapR family.

Functionally, transcriptional factor involved in regulation of membrane lipid biosynthesis by repressing genes involved in fatty acid and phospholipid metabolism. In Bacillus velezensis (strain DSM 23117 / BGSC 10A6 / LMG 26770 / FZB42) (Bacillus amyloliquefaciens subsp. plantarum), this protein is Transcription factor FapR.